The following is a 1196-amino-acid chain: DNA-directed RNA polymerase subunit beta (1196 aa).

The protein belongs to the RNA polymerase beta chain family. The RNAP catalytic core consists of 2 alpha, 1 beta, 1 beta' and 1 omega subunit. When a sigma factor is associated with the core the holoenzyme is formed, which can initiate transcription.

It catalyses the reaction RNA(n) + a ribonucleoside 5'-triphosphate = RNA(n+1) + diphosphate. In terms of biological role, DNA-dependent RNA polymerase catalyzes the transcription of DNA into RNA using the four ribonucleoside triphosphates as substrates. The protein is DNA-directed RNA polymerase subunit beta of Lactococcus lactis subsp. lactis (strain IL1403) (Streptococcus lactis).